Here is a 301-residue protein sequence, read N- to C-terminus: Probable porphobilinogen deaminase (301 aa).

An S-(dipyrrolylmethanemethyl)cysteine modification is found at cysteine 241.

The protein belongs to the HMBS family. Requires dipyrromethane as cofactor.

It carries out the reaction 4 porphobilinogen + H2O = hydroxymethylbilane + 4 NH4(+). It functions in the pathway porphyrin-containing compound metabolism; protoporphyrin-IX biosynthesis; coproporphyrinogen-III from 5-aminolevulinate: step 2/4. Tetrapolymerization of the monopyrrole PBG into the hydroxymethylbilane pre-uroporphyrinogen in several discrete steps. The polypeptide is Probable porphobilinogen deaminase (Pyrobaculum islandicum (strain DSM 4184 / JCM 9189 / GEO3)).